Here is a 423-residue protein sequence, read N- to C-terminus: UDP-N-acetylglucosamine 1-carboxyvinyltransferase 1 (423 aa).

24–25 is a binding site for phosphoenolpyruvate; sequence KN. Position 94 (arginine 94) interacts with UDP-N-acetyl-alpha-D-glucosamine. Catalysis depends on cysteine 118, which acts as the Proton donor. Residue cysteine 118 is modified to 2-(S-cysteinyl)pyruvic acid O-phosphothioketal. Residues 123 to 127, aspartate 309, and isoleucine 331 each bind UDP-N-acetyl-alpha-D-glucosamine; that span reads RPIDQ.

It belongs to the EPSP synthase family. MurA subfamily.

The protein resides in the cytoplasm. The enzyme catalyses phosphoenolpyruvate + UDP-N-acetyl-alpha-D-glucosamine = UDP-N-acetyl-3-O-(1-carboxyvinyl)-alpha-D-glucosamine + phosphate. It functions in the pathway cell wall biogenesis; peptidoglycan biosynthesis. In terms of biological role, cell wall formation. Adds enolpyruvyl to UDP-N-acetylglucosamine. This chain is UDP-N-acetylglucosamine 1-carboxyvinyltransferase 1, found in Staphylococcus haemolyticus (strain JCSC1435).